The chain runs to 490 residues: Tandem C2 domains nuclear protein (490 aa).

Phosphoserine occurs at positions 83, 156, 168, 174, and 211. The segment at 189-215 is disordered; sequence HDSLSSVPSSSSSRKNSQGSNRSLDTI. Low complexity predominate over residues 192–211; it reads LSSVPSSSSSRKNSQGSNRS. 2 positions are modified to phosphothreonine: Thr214 and Thr216. The residue at position 218 (Ser218) is a Phosphoserine. C2 domains lie at 223–342 and 344–471; these read DFGR…SLDI and PPSK…NQWK. Positions 447–449 match the Nuclear localization signal motif; the sequence is RRK.

The protein localises to the nucleus. The sequence is that of Tandem C2 domains nuclear protein (TC2N) from Homo sapiens (Human).